The chain runs to 472 residues: MTVETFKPKQTTTLDTPAKRLEAASTNAVTTGNRIGFVSLGCPKNLVDSERILTQLRIDGYEVTNSYDNADLVIVNTCGFIDAAVEESLDAVREALEENGKVIVTGCLGAKENQIREVYPDVLEITGPHSYEAVLKHVHKYVPKPEHNPFTSLIPQTGVKLTPKHYAYLKISEGCDNRCTFCIIPSLRGDLNSRPAGSILDEAKRLVESGVQEILVVSQDTSAYGKDKSGRTDFWDGMPVKQDITSLARQLGKMGAWVRLHYIYPYPWVDDLIPLMAEGLILPYLDIPMQHASPRILKMMKRPGRVDRQLEAIQRWREICPDLVIRSTFIVGFPGETEEDFQILLDFLKEARLDRVGCFKYSEVDGAVANTIAELISEDVKEDRYHRFMELQAEISAERLARFVGRTLDILIDDVDEEGAIGRSFADAPEIDGMVFINGETELEPGMLVRARITHSDEHDLWAEVVDADTQD.

One can recognise an MTTase N-terminal domain in the interval 33–143 (NRIGFVSLGC…VLKHVHKYVP (111 aa)). Positions 42, 78, 107, 175, 179, and 182 each coordinate [4Fe-4S] cluster. In terms of domain architecture, Radical SAM core spans 161–398 (LTPKHYAYLK…MELQAEISAE (238 aa)). In terms of domain architecture, TRAM spans 401–467 (ARFVGRTLDI…EHDLWAEVVD (67 aa)).

It belongs to the methylthiotransferase family. RimO subfamily. [4Fe-4S] cluster is required as a cofactor.

It is found in the cytoplasm. The enzyme catalyses L-aspartate(89)-[ribosomal protein uS12]-hydrogen + (sulfur carrier)-SH + AH2 + 2 S-adenosyl-L-methionine = 3-methylsulfanyl-L-aspartate(89)-[ribosomal protein uS12]-hydrogen + (sulfur carrier)-H + 5'-deoxyadenosine + L-methionine + A + S-adenosyl-L-homocysteine + 2 H(+). Catalyzes the methylthiolation of an aspartic acid residue of ribosomal protein uS12. The sequence is that of Ribosomal protein uS12 methylthiotransferase RimO from Shewanella putrefaciens (strain CN-32 / ATCC BAA-453).